We begin with the raw amino-acid sequence, 131 residues long: Ribosome-binding factor A (131 aa).

Belongs to the RbfA family. In terms of assembly, monomer. Binds 30S ribosomal subunits, but not 50S ribosomal subunits or 70S ribosomes.

The protein resides in the cytoplasm. One of several proteins that assist in the late maturation steps of the functional core of the 30S ribosomal subunit. Associates with free 30S ribosomal subunits (but not with 30S subunits that are part of 70S ribosomes or polysomes). Required for efficient processing of 16S rRNA. May interact with the 5'-terminal helix region of 16S rRNA. This Gloeothece citriformis (strain PCC 7424) (Cyanothece sp. (strain PCC 7424)) protein is Ribosome-binding factor A.